A 635-amino-acid polypeptide reads, in one-letter code: Cerevisin (635 aa).

The signal sequence occupies residues 1–19 (MKLENTLFTLGALGSISAA). Residues 20 to 280 (LVIPNLENAA…VERDSIVEAT (261 aa)) constitute a propeptide that is removed on maturation. 4 stretches are compositionally biased toward basic and acidic residues: residues 35–50 (INKEDHHERPRKVEFT), 74–85 (KGQDKESPEFNG), 94–109 (SAHEGGKGMKPKHESS), and 126–136 (GCHENKVEEKK). The segment at 35–155 (INKEDHHERP…KHHEKTLEKG (121 aa)) is disordered. Over residues 137–155 (MKGKKVKGKKHHEKTLEKG) the composition is skewed to basic residues. In terms of domain architecture, Inhibitor I9 spans 182–278 (RYIIVFKRGA…DFVERDSIVE (97 aa)). The Peptidase S8 domain occupies 289-614 (PWGLARISHR…KQELNMDEFI (326 aa)). Residues Asp325 and His357 each act as charge relay system in the active site. The cysteines at positions 460 and 491 are disulfide-linked. The active-site Charge relay system is Ser519. Positions 575-635 (DTPNVLIYNG…RDILDKLNII (61 aa)) are excised as a propeptide. Asn594 carries N-linked (GlcNAc...) asparagine glycosylation.

It belongs to the peptidase S8 family. Activated by N- and C-terminal proteolytic cleavage. Protease B (PrB/PRB1) processing requires at least 4 cleavages. First, the signal peptide is removed from the 76 kDa preproprotease B by signal peptidase in the ER. Then, PrB removes its own Pro-region (in trans) at the N-terminus, producing a 39 kDa form before exiting the ER. In the Golgi complex, the C-terminal Post-region of the 40 kDa proprotease B undergoes protease A (PrA/PEP4)-mediated processing to a 37 kDa intermediate, which in turn is quickly processed again by PrB in trans to yield the 31 kDa mature PrB. In terms of processing, glycosylated. Preproprotease B is a 76 kDa unglycosylated precursor that enters the endoplasmic reticulum (ER), where it receives one Asn-linked and an undetermined number of non-Asn-linked carbohydrate side chains. In the Golgi complex, the 39 kDa form becomes 40 kDa, due to elaboration of the Asn-linked side chain. The ultimate processing step removes a peptide containing the Asn-linked chain. Mature PrB has only non-Asn-linked carbohydrates.

It localises to the vacuole. The catalysed reaction is Hydrolysis of proteins with broad specificity, and of Bz-Arg-OEt &gt; Ac-Tyr-OEt. Does not hydrolyze peptide amides.. Vacuolar proteinase B involved in protein degradation in the vacuole. Among other substrates, acts on carboxypeptidase Y (cpY/PRC1) to activate it by processing its Pro-peptide. Required for meiosis and spore formation, and for optimal survival in stationary phase. The chain is Cerevisin (PRB1) from Saccharomyces cerevisiae (strain ATCC 204508 / S288c) (Baker's yeast).